We begin with the raw amino-acid sequence, 561 residues long: Acyl-CoA ligase frbB (561 aa).

ATP-binding positions include 213–221 (TSGTSGAQK), 354–359 (PGWGLT), D437, R456, and K551. The interval 284–354 (DLKRVLGSIA…TLRPKWHLQP (71 aa)) is SBD1. Residues 355–417 (GWGLTEGGGA…MKSPSVIAGY (63 aa)) are SBD2.

Belongs to the ATP-dependent AMP-binding enzyme family.

The protein operates within antifungal biosynthesis. Functionally, acyl-CoA ligase; part of the gene cluster that mediates the biosynthesis of the antifungal antibiotic FR901469, an inhibitor of beta-1,3-glucansynthase, exerting antifungal activity against the pathogenes Candida albicans and Aspergillus fumigatus. FR901469 is a cyclic depsipeptide containing 12 amino acid residues and a fatty acid chain. The NRPS frbI contains 12 modules responsible for the formation of the depsipeptide backbone which is denoted as Acyl-Thr-Ala-Tyr-Val-4OHPro-Thr-Thr-3OHPro-threo3OHGln-Gly-Thr-Orn-OH (C71H116N14O23). The PKS frbB is probably involved in the production of the hydrocarbon chain, and the acyl-CoA ligase frbC might be involved in the transport of the chain to the peptide ptoduct of frbI. Because FR901469 contains 3 hydroxylated amino acid residues, the 3 oxygenases frbA, frbH, and frbJ might be participating in amino acid hydroxylation. As no thioesterase domains were detected in frbI or frbB, the thioesterases frbD and frbE may instead release and cyclize the products of the NRPS and PKS, respectively. The chain is Acyl-CoA ligase frbB from Dothideomycetidae sp. (strain 11243) (Fungal sp. (strain No.11243)).